A 156-amino-acid polypeptide reads, in one-letter code: Small ribosomal subunit protein uS7 (156 aa).

Belongs to the universal ribosomal protein uS7 family. As to quaternary structure, part of the 30S ribosomal subunit. Contacts proteins S9 and S11.

Its function is as follows. One of the primary rRNA binding proteins, it binds directly to 16S rRNA where it nucleates assembly of the head domain of the 30S subunit. Is located at the subunit interface close to the decoding center, probably blocks exit of the E-site tRNA. In Mycobacterium leprae (strain TN), this protein is Small ribosomal subunit protein uS7.